Reading from the N-terminus, the 599-residue chain is Protein ref(2)P (599 aa).

The PB1 domain occupies 3 to 88 (EKLLKITYQG…CESNMHVQVA (86 aa)). The ZZ-type zinc finger occupies 122–173 (HDSVQCDGCGLAPLIGFRYKCVQCSNFDLCQKCESAHKHPEHLMLRMPTNNG). Zn(2+)-binding residues include Cys-127, Cys-130, Cys-142, Cys-145, Cys-151, Cys-154, His-160, and His-163. Disordered regions lie at residues 192–225 (RRSR…HARR), 245–319 (TTAT…INLD), 357–453 (GIFA…LDPE), and 507–544 (ASAN…DDKR). The segment covering 199-211 (PFQEASQPAPAAE) has biased composition (low complexity). Over residues 276 to 286 (KATESEAKPTE) the composition is skewed to basic and acidic residues. Residues 291–319 (NTDQSVPTTEDPVTTPRSTEPTTPVINLD) are compositionally biased toward polar residues. Over residues 375–411 (QSQSSGQSAASSASQSAVPSAAPSANQSNVPSANQSA) the composition is skewed to low complexity. Repeat copies occupy residues 386–393 (SASQSAVP), 399–406 (ANQSNVPS), and 407–413 (ANQSATP). Residues 386 to 413 (SASQSAVPSAAPSANQSNVPSANQSATP) are 3 X 8 AA repeats of S-A-N-Q-S-X-X-P. The segment covering 412–423 (TPSISGSISDAQ) has biased composition (polar residues). The span at 511-536 (TQTAQVDTVSTSTSTTSVTTNSVGTS) shows a compositional bias: low complexity. The UBA domain occupies 550-595 (HTDERINQSIHAMMAMGFSNEGAWLTQLLESVQGNIPAALDVMHVS).

Interacts with aPKC and Traf6.

The protein localises to the nucleus. It localises to the cytoplasm. In terms of biological role, required for selective autophagy activation by ubiquitinated proteins. Implicated in sigma rhabdovirus multiplication and necessary for male fertility. Involved in activating transcription of Drs. This Drosophila simulans (Fruit fly) protein is Protein ref(2)P (ref(2)P).